Consider the following 218-residue polypeptide: UPF0301 protein RPB_4502 (218 aa).

Positions 1–26 (MVTKSKRPKSGDRSGREPGNAGPIEQ) are disordered.

This sequence belongs to the UPF0301 (AlgH) family.

The polypeptide is UPF0301 protein RPB_4502 (Rhodopseudomonas palustris (strain HaA2)).